We begin with the raw amino-acid sequence, 351 residues long: Histidine protein kinase SaeS (351 aa).

2 helical membrane-spanning segments follow: residues 9-29 and 40-60; these read IIIG…IAYI and TLTL…SIFI. Residues 61–114 enclose the HAMP domain; that stretch reads NPLIQKIKQFNIKTKQFANGNYASNDKTFNSPKEIYELNQSFNKMASEITQQMN. The Histidine kinase domain maps to 129 to 348; that stretch reads NLAHDLKTPL…TMTVTLHKLD (220 aa). Phosphohistidine; by autocatalysis is present on H132.

Autophosphorylated.

Its subcellular location is the cell membrane. The enzyme catalyses ATP + protein L-histidine = ADP + protein N-phospho-L-histidine.. Member of the two-component regulatory system SaeR/SaeS involved in the regulation of staphylococcal virulence factors in a strain-dependent fashion. Probably functions as a membrane-associated protein kinase that upon sensing the appropriate signal, autophosphorylates and in turn activates the cytosolic response regulator SaeR. SaeR/SaeS activates the expression of exoproteins involved in adhesion and invasion of host cells, including hemolysins (hla, hlb, hlgC), coa, DNase, spa and cell wall-associated proteins (emp, eap, fnbA, fnbB, efb). Represses the expression of type 5 capsular polysaccharide (cap operon). Also modulates the expression of several other genes. This Staphylococcus aureus (strain Newman) protein is Histidine protein kinase SaeS (saeS).